Consider the following 37-residue polypeptide: Cytochrome b6-f complex subunit 5 (37 aa).

Residues Leu-5 to Ala-25 form a helical membrane-spanning segment.

The protein belongs to the PetG family. The 4 large subunits of the cytochrome b6-f complex are cytochrome b6, subunit IV (17 kDa polypeptide, PetD), cytochrome f and the Rieske protein, while the 4 small subunits are PetG, PetL, PetM and PetN. The complex functions as a dimer.

Its subcellular location is the plastid. It is found in the chloroplast thylakoid membrane. In terms of biological role, component of the cytochrome b6-f complex, which mediates electron transfer between photosystem II (PSII) and photosystem I (PSI), cyclic electron flow around PSI, and state transitions. PetG is required for either the stability or assembly of the cytochrome b6-f complex. This chain is Cytochrome b6-f complex subunit 5, found in Pinus thunbergii (Japanese black pine).